Here is a 374-residue protein sequence, read N- to C-terminus: Phosphomevalonate kinase (374 aa).

It belongs to the GHMP kinase family. Homodimer. Mg(2+) serves as cofactor.

It carries out the reaction (R)-5-phosphomevalonate + ATP = (R)-5-diphosphomevalonate + ADP. The protein operates within isoprenoid biosynthesis; isopentenyl diphosphate biosynthesis via mevalonate pathway; isopentenyl diphosphate from (R)-mevalonate: step 2/3. Catalyzes the phosphorylation of (R)-mevalonate 5-phosphate (MVAP) to (R)-mevalonate 5-diphosphate (MVAPP). Functions in the mevalonate (MVA) pathway leading to isopentenyl diphosphate (IPP), a key precursor for the biosynthesis of isoprenoid compounds. The polypeptide is Phosphomevalonate kinase (Streptomyces sp. (strain CL190)).